A 308-amino-acid polypeptide reads, in one-letter code: Probable manganese-dependent inorganic pyrophosphatase (308 aa).

Residues His-9, Asp-13, Asp-15, Asp-74, His-96, and Asp-148 each contribute to the Mn(2+) site.

Belongs to the PPase class C family. The cofactor is Mn(2+).

Its subcellular location is the cytoplasm. The enzyme catalyses diphosphate + H2O = 2 phosphate + H(+). This is Probable manganese-dependent inorganic pyrophosphatase from Oceanobacillus iheyensis (strain DSM 14371 / CIP 107618 / JCM 11309 / KCTC 3954 / HTE831).